A 126-amino-acid polypeptide reads, in one-letter code: Holo-[acyl-carrier-protein] synthase (126 aa).

Positions 9 and 58 each coordinate Mg(2+).

The protein belongs to the P-Pant transferase superfamily. AcpS family. It depends on Mg(2+) as a cofactor.

It is found in the cytoplasm. The enzyme catalyses apo-[ACP] + CoA = holo-[ACP] + adenosine 3',5'-bisphosphate + H(+). In terms of biological role, transfers the 4'-phosphopantetheine moiety from coenzyme A to a Ser of acyl-carrier-protein. The chain is Holo-[acyl-carrier-protein] synthase from Klebsiella pneumoniae subsp. pneumoniae (strain ATCC 700721 / MGH 78578).